Consider the following 236-residue polypeptide: Small ribosomal subunit protein uS3 (236 aa).

The 69-residue stretch at 39-107 folds into the KH type-2 domain; the sequence is IREFLTEELK…DTSLNIVEVR (69 aa). Positions 214 to 236 are disordered; the sequence is ASERRAVEGDNQGSSSNRRRENA.

The protein belongs to the universal ribosomal protein uS3 family. In terms of assembly, part of the 30S ribosomal subunit. Forms a tight complex with proteins S10 and S14.

In terms of biological role, binds the lower part of the 30S subunit head. Binds mRNA in the 70S ribosome, positioning it for translation. The polypeptide is Small ribosomal subunit protein uS3 (Brucella abortus (strain S19)).